Reading from the N-terminus, the 156-residue chain is ATP synthase subunit b (156 aa).

Residues 1–21 traverse the membrane as a helical segment; that stretch reads MNVTVTLIGQMVAFGILVWFV.

This sequence belongs to the ATPase B chain family. F-type ATPases have 2 components, F(1) - the catalytic core - and F(0) - the membrane proton channel. F(1) has five subunits: alpha(3), beta(3), gamma(1), delta(1), epsilon(1). F(0) has three main subunits: a(1), b(2) and c(10-14). The alpha and beta chains form an alternating ring which encloses part of the gamma chain. F(1) is attached to F(0) by a central stalk formed by the gamma and epsilon chains, while a peripheral stalk is formed by the delta and b chains.

The protein localises to the cell inner membrane. F(1)F(0) ATP synthase produces ATP from ADP in the presence of a proton or sodium gradient. F-type ATPases consist of two structural domains, F(1) containing the extramembraneous catalytic core and F(0) containing the membrane proton channel, linked together by a central stalk and a peripheral stalk. During catalysis, ATP synthesis in the catalytic domain of F(1) is coupled via a rotary mechanism of the central stalk subunits to proton translocation. Functionally, component of the F(0) channel, it forms part of the peripheral stalk, linking F(1) to F(0). The polypeptide is ATP synthase subunit b (Nitrosococcus oceani (strain ATCC 19707 / BCRC 17464 / JCM 30415 / NCIMB 11848 / C-107)).